The chain runs to 255 residues: Type III pantothenate kinase (255 aa).

6–13 lines the ATP pocket; sequence DIGNSNID. 107–110 is a binding site for substrate; that stretch reads GADL. D109 (proton acceptor) is an active-site residue. D129 is a K(+) binding site. T132 contributes to the ATP binding site. T183 lines the substrate pocket.

The protein belongs to the type III pantothenate kinase family. As to quaternary structure, homodimer. The cofactor is NH4(+). K(+) serves as cofactor.

Its subcellular location is the cytoplasm. It catalyses the reaction (R)-pantothenate + ATP = (R)-4'-phosphopantothenate + ADP + H(+). It functions in the pathway cofactor biosynthesis; coenzyme A biosynthesis; CoA from (R)-pantothenate: step 1/5. Its function is as follows. Catalyzes the phosphorylation of pantothenate (Pan), the first step in CoA biosynthesis. In Dictyoglomus turgidum (strain DSM 6724 / Z-1310), this protein is Type III pantothenate kinase.